The following is a 562-amino-acid chain: Cell division protein FtsZ (562 aa).

GTP is bound by residues Gly23–Asn27, Gly110–Gly112, Glu141, Arg145, and Asp189. The segment covering Pro404–Pro413 has biased composition (low complexity). Disordered stretches follow at residues Pro404–Pro428 and Glu462–Asn562. A compositionally biased stretch (basic and acidic residues) spans Phe418–Pro428. Composition is skewed to low complexity over residues Ala464–Arg486 and Gly500–Pro510.

It belongs to the FtsZ family. Homodimer. Polymerizes to form a dynamic ring structure in a strictly GTP-dependent manner. Interacts directly with several other division proteins. Interacts with FtsZ-like protein (also called FtsZm).

Its subcellular location is the cytoplasm. In terms of biological role, essential cell division protein that forms a contractile ring structure (Z ring) at the future cell division site. The regulation of the ring assembly controls the timing and the location of cell division. One of the functions of the FtsZ ring is to recruit other cell division proteins to the septum to produce a new cell wall between the dividing cells. Binds GTP and shows GTPase activity. Mild overexpression impairs cell division, leading to very elongated cells. Isolated protein forms filaments and bundles in the presence of GTP. The sequence is that of Cell division protein FtsZ from Magnetospirillum gryphiswaldense (strain DSM 6361 / JCM 21280 / NBRC 15271 / MSR-1).